We begin with the raw amino-acid sequence, 485 residues long: Carbohydrate sulfotransferase 7 (485 aa).

Over 1–12 (MKGRRRRRREYC) the chain is Cytoplasmic. Residues 13-33 (KFTLLLALYTLLLLLVPSVLD) traverse the membrane as a helical; Signal-anchor for type II membrane protein segment. Topologically, residues 34 to 485 (SGSEQDKGGR…PLETNANWAT (452 aa)) are lumenal. Positions 66 to 88 (EQGAEVRFQAEGNPDRSPRPQGN) are disordered. A glycan (N-linked (GlcNAc...) asparagine) is linked at Asn88. 109–115 (WRTGSSF) is a 3'-phosphoadenylyl sulfate binding site. Asn185 is a glycosylation site (N-linked (GlcNAc...) asparagine). 277–285 (RDPRAVHNS) is a 3'-phosphoadenylyl sulfate binding site. N-linked (GlcNAc...) asparagine glycosylation is present at Asn406. Ser461 bears the Phosphoserine mark. The span at 465 to 475 (RDVKTVRKGET) shows a compositional bias: basic and acidic residues. The tract at residues 465–485 (RDVKTVRKGETPLETNANWAT) is disordered.

Belongs to the sulfotransferase 1 family. Gal/GlcNAc/GalNAc subfamily.

The protein localises to the golgi apparatus membrane. It carries out the reaction chondroitin beta-D-glucuronate + n 3'-phosphoadenylyl sulfate = chondroitin 6'-sulfate + n adenosine 3',5'-bisphosphate + n H(+). Sulfotransferase that utilizes 3'-phospho-5'-adenylyl sulfate (PAPS) as sulfonate donor to catalyze the transfer of sulfate to position 6 of non-reducing N-acetylglucosamine (GlcNAc) residues. Preferentially acts on mannose-linked GlcNAc. Also able to catalyze the transfer of sulfate to position 6 of the N-acetylgalactosamine (GalNAc) residue of chondroitin. Also acts on core 2 mucin-type oligosaccharide and N-acetyllactosamine oligomer with a lower efficiency. Has weak or no activity toward keratan sulfate and oligosaccharides containing the Galbeta1-4GlcNAc. Catalyzes 6-O-sulfation of beta-benzyl GlcNAc but not alpha- or beta-benzyl GalNAc. The protein is Carbohydrate sulfotransferase 7 (Chst7) of Rattus norvegicus (Rat).